A 386-amino-acid chain; its full sequence is Bifunctional enzyme IspD/IspF (386 aa).

Residues 1–230 are 2-C-methyl-D-erythritol 4-phosphate cytidylyltransferase; it reads MIRDERVAAI…RARSILEAPV (230 aa). The segment at 231 to 386 is 2-C-methyl-D-erythritol 2,4-cyclodiphosphate synthase; it reads AMGVGYDTHR…HAVALLVRVR (156 aa). 2 residues coordinate a divalent metal cation: D237 and H239. Residues 237–239 and 262–263 each bind 4-CDP-2-C-methyl-D-erythritol 2-phosphate; these read DTH and HS. H270 is an a divalent metal cation binding site. 4-CDP-2-C-methyl-D-erythritol 2-phosphate is bound by residues 284-286, 289-293, 360-363, F367, and R370; these read DLG, FPDTD, and TTGE.

This sequence in the N-terminal section; belongs to the IspD/TarI cytidylyltransferase family. IspD subfamily. In the C-terminal section; belongs to the IspF family. Requires a divalent metal cation as cofactor.

The catalysed reaction is 2-C-methyl-D-erythritol 4-phosphate + CTP + H(+) = 4-CDP-2-C-methyl-D-erythritol + diphosphate. The enzyme catalyses 4-CDP-2-C-methyl-D-erythritol 2-phosphate = 2-C-methyl-D-erythritol 2,4-cyclic diphosphate + CMP. It functions in the pathway isoprenoid biosynthesis; isopentenyl diphosphate biosynthesis via DXP pathway; isopentenyl diphosphate from 1-deoxy-D-xylulose 5-phosphate: step 2/6. Its pathway is isoprenoid biosynthesis; isopentenyl diphosphate biosynthesis via DXP pathway; isopentenyl diphosphate from 1-deoxy-D-xylulose 5-phosphate: step 4/6. Its function is as follows. Bifunctional enzyme that catalyzes the formation of 4-diphosphocytidyl-2-C-methyl-D-erythritol from CTP and 2-C-methyl-D-erythritol 4-phosphate (MEP) (IspD), and catalyzes the conversion of 4-diphosphocytidyl-2-C-methyl-D-erythritol 2-phosphate (CDP-ME2P) to 2-C-methyl-D-erythritol 2,4-cyclodiphosphate (ME-CPP) with a corresponding release of cytidine 5-monophosphate (CMP) (IspF). This is Bifunctional enzyme IspD/IspF from Anaeromyxobacter sp. (strain Fw109-5).